The sequence spans 524 residues: MADDPHNTSTSDVSELVPDNTEPSAANVKEDAETTAARRELKQTTISDKAKRDSAQLSQEDDKSASEEDDNKSDAGEPEKKKPRTSRGLTPEVQLAAPKQEVPKETVASPKKRTHDELEQDGKEEEEKKEGEKPSSQNRAERDEPEKKRPRDRQASLSVERDGQKEVEPLSAQESRPSSAEKPKIEEKKDESKDTKVDKPQTSSSAFANSSMAKFASSTTSPFGAFGAAAAGKTNLFGLPATSSNIFGSKSADASAAPAGPPKLSFGSASAASPFASLNGQAGGMSSLFKSPFASAFSGGSSALKTAGATGFGKPGEPLKTGKSAKPFGAPESDEEDEGEGEEGEENKSENGEGEEKEEEEKEEKASGEEKKKFKLQKVHIDDGEGNETTLLSVRAKMYVMEKGVGWKERGAGMLKVNVPKQAVEVEEGNQPDADSFDPAALDDAARKLVRLIMRQDSTLRVILNTPILPAMKFQVNHKLKAATVLFTAFEGGEARQVQMKMSQANATQFSNMVEKIKEKLAAA.

Positions 1 to 219 (MADDPHNTST…SSMAKFASST (219 aa)) are disordered. 3 stretches are compositionally biased toward basic and acidic residues: residues 28 to 80 (VKED…EPEK), 114 to 168 (THDE…KEVE), and 179 to 199 (SAEKPKIEEKKDESKDTKVDK). Positions 37-44 (ARRELKQT) match the Nuclear localization signal motif. Positions 111 to 133 (KKRTHDELEQDGKEEEEKKEGEK) form a coiled coil. Positions 200-219 (PQTSSSAFANSSMAKFASST) are enriched in polar residues. FG repeat units follow at residues 223–224 (FG), 226–227 (FG), 237–238 (FG), 247–248 (FG), 266–267 (FG), 312–313 (FG), and 328–329 (FG). Disordered stretches follow at residues 247 to 284 (FGSKSADASAAPAGPPKLSFGSASAASPFASLNGQAGG) and 300 to 371 (GSSA…GEEK). Positions 248 to 277 (GSKSADASAAPAGPPKLSFGSASAASPFAS) are enriched in low complexity. 2 stretches are compositionally biased toward acidic residues: residues 332–345 (ESDEEDEGEGEEGE) and 352–362 (GEGEEKEEEEK). The stretch at 345–376 (EENKSENGEGEEKEEEEKEEKASGEEKKKFKL) forms a coiled coil. The region spanning 377–475 (QKVHIDDGEG…TPILPAMKFQ (99 aa)) is the RanBD1 domain. A coiled-coil region spans residues 503 to 524 (SQANATQFSNMVEKIKEKLAAA).

The nuclear pore complex (NPC) constitutes the exclusive means of nucleocytoplasmic transport. NPCs allow the passive diffusion of ions and small molecules and the active, nuclear transport receptor-mediated bidirectional transport of macromolecules such as proteins, RNAs, ribonucleoparticles (RNPs), and ribosomal subunits across the nuclear envelope. The 55-60 MDa NPC is composed of at least 28 different subunits: AMO1, ELYS, GLE1, GLE2, MLP1, NDC1, NIC96, NSP1, NUP133, NUP145, NUP152, NUP159, NUP170, NUP188, NUP192, NUP37, NUP49, NUP53, NUP56, NUP57, NUP82, NUP84, NUP85, POM152, POM33, POM34, SEC13 and SEH1. Due to its 8-fold rotational symmetry, all subunits are present with 8 copies or multiples thereof.

Its subcellular location is the nucleus. It is found in the nuclear pore complex. The protein localises to the nucleus membrane. Its function is as follows. Functions as a component of the nuclear pore complex (NPC). NPC components, collectively referred to as nucleoporins (NUPs), can play the role of both NPC structural components and of docking or interaction partners for transiently associated nuclear transport factors. Active directional transport is assured by both, a Phe-Gly (FG) repeat affinity gradient for these transport factors across the NPC and a transport cofactor concentration gradient across the nuclear envelope (GSP1 and GSP2 GTPases associated predominantly with GTP in the nucleus, with GDP in the cytoplasm). This is Nucleoporin NUP56 (NUP56) from Chaetomium thermophilum (strain DSM 1495 / CBS 144.50 / IMI 039719) (Thermochaetoides thermophila).